The chain runs to 124 residues: MATINQLVRKPRRSKVTKSNSAALKACPQKRGVCTRVYTTTPKKPNSALRKVARVRLTNGFEVTSYIGGEGHNLQEHSVILIRGGRVKDLPGVRFHTVRGALDCAGVSDRRQARSKYGTKRPKG.

The disordered stretch occupies residues 1-23; that stretch reads MATINQLVRKPRRSKVTKSNSAA. Residue aspartate 89 is modified to 3-methylthioaspartic acid.

Belongs to the universal ribosomal protein uS12 family. As to quaternary structure, part of the 30S ribosomal subunit. Contacts proteins S8 and S17. May interact with IF1 in the 30S initiation complex.

Its function is as follows. With S4 and S5 plays an important role in translational accuracy. Interacts with and stabilizes bases of the 16S rRNA that are involved in tRNA selection in the A site and with the mRNA backbone. Located at the interface of the 30S and 50S subunits, it traverses the body of the 30S subunit contacting proteins on the other side and probably holding the rRNA structure together. The combined cluster of proteins S8, S12 and S17 appears to hold together the shoulder and platform of the 30S subunit. This Pseudoalteromonas translucida (strain TAC 125) protein is Small ribosomal subunit protein uS12.